A 72-amino-acid chain; its full sequence is Small ribosomal subunit protein eS17 (72 aa).

It belongs to the eukaryotic ribosomal protein eS17 family.

The protein is Small ribosomal subunit protein eS17 of Nanoarchaeum equitans (strain Kin4-M).